Consider the following 255-residue polypeptide: Imidazole glycerol phosphate synthase subunit HisF (255 aa).

Catalysis depends on residues Asp12 and Asp131.

Belongs to the HisA/HisF family. As to quaternary structure, heterodimer of HisH and HisF.

It is found in the cytoplasm. The enzyme catalyses 5-[(5-phospho-1-deoxy-D-ribulos-1-ylimino)methylamino]-1-(5-phospho-beta-D-ribosyl)imidazole-4-carboxamide + L-glutamine = D-erythro-1-(imidazol-4-yl)glycerol 3-phosphate + 5-amino-1-(5-phospho-beta-D-ribosyl)imidazole-4-carboxamide + L-glutamate + H(+). It functions in the pathway amino-acid biosynthesis; L-histidine biosynthesis; L-histidine from 5-phospho-alpha-D-ribose 1-diphosphate: step 5/9. Its function is as follows. IGPS catalyzes the conversion of PRFAR and glutamine to IGP, AICAR and glutamate. The HisF subunit catalyzes the cyclization activity that produces IGP and AICAR from PRFAR using the ammonia provided by the HisH subunit. The chain is Imidazole glycerol phosphate synthase subunit HisF from Zymomonas mobilis subsp. mobilis (strain ATCC 31821 / ZM4 / CP4).